The sequence spans 258 residues: Acyl-[acyl-carrier-protein]--UDP-N-acetylglucosamine O-acyltransferase (258 aa).

This sequence belongs to the transferase hexapeptide repeat family. LpxA subfamily. Homotrimer.

It is found in the cytoplasm. It carries out the reaction a (3R)-hydroxyacyl-[ACP] + UDP-N-acetyl-alpha-D-glucosamine = a UDP-3-O-[(3R)-3-hydroxyacyl]-N-acetyl-alpha-D-glucosamine + holo-[ACP]. It participates in glycolipid biosynthesis; lipid IV(A) biosynthesis; lipid IV(A) from (3R)-3-hydroxytetradecanoyl-[acyl-carrier-protein] and UDP-N-acetyl-alpha-D-glucosamine: step 1/6. Its function is as follows. Involved in the biosynthesis of lipid A, a phosphorylated glycolipid that anchors the lipopolysaccharide to the outer membrane of the cell. This chain is Acyl-[acyl-carrier-protein]--UDP-N-acetylglucosamine O-acyltransferase, found in Pseudomonas aeruginosa (strain LESB58).